The chain runs to 386 residues: Transcription factor GTE1 (386 aa).

Disordered stretches follow at residues 66–106 (GAAQ…KHVS) and 340–386 (ANKS…AKKA). The segment covering 68–78 (AQTNTSKSNSG) has biased composition (polar residues). Residues 105–211 (VSSPDLMRQF…EKFEEKWLLI (107 aa)) form the Bromo domain. An NET domain is found at 263–344 (RESVVQRCRK…EALKAANKSS (82 aa)). A compositionally biased stretch (low complexity) spans 345–358 (GGTNAQNNNNTGTG).

In terms of tissue distribution, barely detectable in stems, leaves, siliques, and dry seeds, but was present at considerable levels in roots, flowers and imbibited seeds.

The protein resides in the nucleus. In terms of biological role, transcription activator that plays a role in the promotion of seed germination by both negatively and positively regulating the abscisic acid (ABA) and phytochrome A (phyA) transduction pathways, respectively. The protein is Transcription factor GTE1 (GTE1) of Arabidopsis thaliana (Mouse-ear cress).